Consider the following 3746-residue polypeptide: N-(5-amino-5-carboxypentanoyl)-L-cysteinyl-D-valine synthase (3746 aa).

Residues 299–711 (EEVVERHEDK…GRADFQIKLR (413 aa)) form an adenylation (A) domain 1 region. The 78-residue stretch at 818–895 (DLRGDTEIAL…RMADLLQNKQ (78 aa)) folds into the Carrier 1 domain. Ser-855 carries the O-(pantetheine 4'-phosphoryl)serine modification. The condensation (C) domain 1 stretch occupies residues 918–1372 (NIYLANSLQQ…YLSSIQLEQL (455 aa)). The adenylation (A) domain 2 stretch occupies residues 1391 to 1801 (FENEASQKPD…GRNDFQVKIR (411 aa)). Positions 1902 to 1979 (PPRSEIERSL…AQTHLILNDA (78 aa)) constitute a Carrier 2 domain. Residue Ser-1939 is modified to O-(pantetheine 4'-phosphoryl)serine. Residues 1994 to 2434 (QMIPVSRAQE…SELSAEGINE (441 aa)) are condensation (C) domain 2. The adenylation (A) domain 3 stretch occupies residues 2478 to 2883 (AFLAAEKIAV…GRGDLQIKMR (406 aa)). The Carrier 3 domain occupies 2991 to 3066 (PPRNIIEAKM…ALHDHVFMKD (76 aa)). Ser-3026 bears the O-(pantetheine 4'-phosphoryl)serine mark. The epimerase (E) domain stretch occupies residues 3084–3500 (GEAPLLPIQD…NKILDGRASQ (417 aa)). The thioesterase (TE) domain stretch occupies residues 3530-3732 (TLFLLPPGEG…FSWVGNPQQV (203 aa)).

Belongs to the NRP synthetase family. Pantetheine 4'-phosphate serves as cofactor. It depends on Mg(2+) as a cofactor.

Its subcellular location is the cytoplasm. It is found in the cytosol. The protein localises to the vacuole membrane. It carries out the reaction L-2-aminoadipate + L-valine + L-cysteine + 3 ATP + H2O = N-[(5S)-5-amino-5-carboxypentanoyl]-L-cysteinyl-D-valine + 3 AMP + 3 diphosphate + 3 H(+). The protein operates within antibiotic biosynthesis; penicillin G biosynthesis; penicillin G from L-alpha-aminoadipate and L-cysteine and L-valine: step 1/3. Nonribosomal peptide synthetase; part of the gene cluster that mediates the biosynthesis of penicillin, the world's most important antibiotic. The trimodular NRPS acvA produces the tripeptide N-[(5S)-5-amino-5-carboxypentanoyl]-L-cysteinyl-D-valine (LLD-ACV or ACV) via condensation of the 3 residues L-2-aminoadipate, L-cysteine and L-valine. The precursor amino acids for penicillin biosynthesis are withdrawn from the vacuolar amino acid pool by the MFS-type transporter penV. Each of the constituent amino acids of the tripeptide ACV are activated as aminoacyl-adenylates with peptide bonds formed through the participation of amino acid thioester intermediates. The penicillin biosynthesis occurs via 3 enzymatic steps, the first corresponding to the production of the tripeptide N-[(5S)-5-amino-5-carboxypentanoyl]-L-cysteinyl-D-valine (LLD-ACV or ACV) by the NRPS acvA. The tripeptide ACV is then cyclized to isopenicillin N (IPN) by the isopenicillin N synthase ipnA that forms the beta-lactam nucleus. Finally, the alpha-aminoadipyl side chain is exchanged for phenylacetic acid by the isopenicillin N acyltransferase aatA to yield penicillin in the peroxisomal matrix. The sequence is that of N-(5-amino-5-carboxypentanoyl)-L-cysteinyl-D-valine synthase from Penicillium chrysogenum (Penicillium notatum).